A 343-amino-acid chain; its full sequence is Aspartate carbamoyltransferase catalytic subunit (343 aa).

2 residues coordinate carbamoyl phosphate: R71 and T72. K99 is an L-aspartate binding site. R121, H149, and Q152 together coordinate carbamoyl phosphate. L-aspartate contacts are provided by R195 and R249. Residues G290 and P291 each contribute to the carbamoyl phosphate site.

This sequence belongs to the aspartate/ornithine carbamoyltransferase superfamily. ATCase family. In terms of assembly, heterododecamer (2C3:3R2) of six catalytic PyrB chains organized as two trimers (C3), and six regulatory PyrI chains organized as three dimers (R2).

The catalysed reaction is carbamoyl phosphate + L-aspartate = N-carbamoyl-L-aspartate + phosphate + H(+). It functions in the pathway pyrimidine metabolism; UMP biosynthesis via de novo pathway; (S)-dihydroorotate from bicarbonate: step 2/3. In terms of biological role, catalyzes the condensation of carbamoyl phosphate and aspartate to form carbamoyl aspartate and inorganic phosphate, the committed step in the de novo pyrimidine nucleotide biosynthesis pathway. The protein is Aspartate carbamoyltransferase catalytic subunit of Rhodopirellula baltica (strain DSM 10527 / NCIMB 13988 / SH1).